The primary structure comprises 863 residues: Bifunctional uridylyltransferase/uridylyl-removing enzyme (863 aa).

The interval 1 to 328 (MLFSPTLSSP…PSNQDTVIDQ (328 aa)) is uridylyltransferase. Positions 329-687 (LDDDFQLINQ…ISNRFSLGGT (359 aa)) are uridylyl-removing. Positions 446 to 568 (VDEHTLRVML…VQNQVRLDYL (123 aa)) constitute an HD domain. ACT domains lie at 688 to 772 (EVFI…PNRQ) and 794 to 863 (QMEL…RNIG).

It belongs to the GlnD family. The cofactor is Mg(2+).

The enzyme catalyses [protein-PII]-L-tyrosine + UTP = [protein-PII]-uridylyl-L-tyrosine + diphosphate. It carries out the reaction [protein-PII]-uridylyl-L-tyrosine + H2O = [protein-PII]-L-tyrosine + UMP + H(+). Uridylyltransferase (UTase) activity is inhibited by glutamine, while glutamine activates uridylyl-removing (UR) activity. Its function is as follows. Modifies, by uridylylation and deuridylylation, the PII regulatory proteins (GlnB and homologs), in response to the nitrogen status of the cell that GlnD senses through the glutamine level. Under low glutamine levels, catalyzes the conversion of the PII proteins and UTP to PII-UMP and PPi, while under higher glutamine levels, GlnD hydrolyzes PII-UMP to PII and UMP (deuridylylation). Thus, controls uridylylation state and activity of the PII proteins, and plays an important role in the regulation of nitrogen assimilation and metabolism. The protein is Bifunctional uridylyltransferase/uridylyl-removing enzyme of Haemophilus influenzae (strain 86-028NP).